The primary structure comprises 456 residues: tRNA-2-methylthio-N(6)-dimethylallyladenosine synthase (456 aa).

Residues 6–123 (KHVYIETYGC…LPNLIEEAQR (118 aa)) enclose the MTTase N-terminal domain. [4Fe-4S] cluster is bound by residues C15, C52, C86, C160, C164, and C167. In terms of domain architecture, Radical SAM core spans 146-380 (RAEGPTAYVS…RILEMAASIS (235 aa)). One can recognise a TRAM domain in the interval 381-444 (EAMVGTEQWV…KNSLRGRLIE (64 aa)).

Belongs to the methylthiotransferase family. MiaB subfamily. As to quaternary structure, monomer. [4Fe-4S] cluster serves as cofactor.

It localises to the cytoplasm. The enzyme catalyses N(6)-dimethylallyladenosine(37) in tRNA + (sulfur carrier)-SH + AH2 + 2 S-adenosyl-L-methionine = 2-methylsulfanyl-N(6)-dimethylallyladenosine(37) in tRNA + (sulfur carrier)-H + 5'-deoxyadenosine + L-methionine + A + S-adenosyl-L-homocysteine + 2 H(+). Its function is as follows. Catalyzes the methylthiolation of N6-(dimethylallyl)adenosine (i(6)A), leading to the formation of 2-methylthio-N6-(dimethylallyl)adenosine (ms(2)i(6)A) at position 37 in tRNAs that read codons beginning with uridine. The sequence is that of tRNA-2-methylthio-N(6)-dimethylallyladenosine synthase from Dichelobacter nodosus (strain VCS1703A).